Here is a 232-residue protein sequence, read N- to C-terminus: Ion-translocating oxidoreductase complex subunit E (232 aa).

6 consecutive transmembrane segments (helical) span residues 12 to 31 (LWRNNSSLVQLLGLCPLLAV), 39 to 59 (LGLGLATTLVLVCTNTAVSAL), 69 to 89 (IPIYVMIIASVVSAVQMLINA), 92 to 112 (FGLYQSLGIFIPLIVTNCIVI), 125 to 145 (ALAALDGLSIGLGSTCTLLLL), and 182 to 202 (PFLLAMLPPGAFIGLGFMLVG).

The protein belongs to the NqrDE/RnfAE family. In terms of assembly, the complex is composed of six subunits: RnfA, RnfB, RnfC, RnfD, RnfE and RnfG.

Its subcellular location is the cell inner membrane. Its function is as follows. Part of a membrane-bound complex that couples electron transfer with translocation of ions across the membrane. This Sodalis glossinidius (strain morsitans) protein is Ion-translocating oxidoreductase complex subunit E.